A 76-amino-acid chain; its full sequence is Putative phosphotransferase enzyme IIA component YyzE (76 aa).

The region spanning 1-76 is the PTS EIIA type-1 domain; sequence MVTPTKHAIG…LHQKIFTVVS (76 aa). H22 (tele-phosphohistidine intermediate) is an active-site residue.

It localises to the cytoplasm. The phosphoenolpyruvate-dependent sugar phosphotransferase system (PTS), a major carbohydrate active -transport system, catalyzes the phosphorylation of incoming sugar substrates concomitant with their translocation across the cell membrane. In Bacillus subtilis (strain 168), this protein is Putative phosphotransferase enzyme IIA component YyzE (yyzE).